We begin with the raw amino-acid sequence, 309 residues long: Short-chain dehydrogenase/reductase ARMGADRAFT_1018437 (309 aa).

3 residues coordinate NADP(+): Lys-64, Asp-86, and Asn-113. Catalysis depends on Ser-167, which acts as the Proton donor. NADP(+) contacts are provided by Tyr-196 and Lys-200. The active-site Proton acceptor is Tyr-196. The active-site Lowers pKa of active site Tyr is the Lys-200.

This sequence belongs to the short-chain dehydrogenases/reductases (SDR) family.

It functions in the pathway secondary metabolite biosynthesis. Functionally, short-chain dehydrogenase/reductase, part of the gene cluster that mediates the biosynthesis of melleolides, a range of antifungal and phytotoxic polyketide derivatives composed of an orsellinic acid (OA) moiety esterified to various sesquiterpene alcohols. The first step in melleolides biosynthesis is performed by the delta(6)-protoilludene synthase PRO1 which catalyzes the cyclization of farnesyl diphosphate to protoilludene. The orsellinic acid synthase armB produces OA by condensing acetyl-CoA with 3 malonyl-CoA units in a three-round chain elongation reaction folowed by a C2-C7 ring closure. ArmB further catalyzes the trans-esterification of OA to the various sesquiterpene alcohols resulting from the hydroxylation of protoilludene. The melleolides cluster also includes 5 cytochrome P450 monooxygenases, 4 NAD(+)-dependent oxidoreductases, one flavin-dependent oxidoreductase, and one O-methyltransferase. The cytochrome P450 monooxygenases may be involved in protoilludene hydroxylation to elaborate melleolides with multiple alcohol groups, such as melleolide D, which carries alcohol functionalities at C-4, C-5, C-10, and C-13. The role of the NAD(+)-dependent enzymes remains unknown. Numerous melleolides, including arnamial, show 5'-O-methylation of the aromatic moiety which may be catalyzed by the methyltransferase encoded in the cluster. The flavin-dependent oxidoreductase might represent the dehydrogenase yielding the aldehyde in position 1 of arnamial and other melleolides. Finally, several halogenase localized outside of the cluster, are able to catalyze the transfer of a single chlorine atom to the melleolide backbone, resulting in a 6'-chloromelleolide product. The polypeptide is Short-chain dehydrogenase/reductase ARMGADRAFT_1018437 (Armillaria gallica (Bulbous honey fungus)).